The following is an 82-amino-acid chain: Turripeptide IX-07 (82 aa).

An N-terminal signal peptide occupies residues 1-21 (MGFYMLLTVALLLTSLMNVEA). The propeptide occupies 22-39 (TPVNQAERSALEKSGLGN). 3 disulfides stabilise this stretch: C48–C70, C55–C74, and C60–C81.

As to expression, expressed by the venom duct.

Its subcellular location is the secreted. This Gemmula speciosa (Splendid gem-turris) protein is Turripeptide IX-07.